Here is a 498-residue protein sequence, read N- to C-terminus: Cytochrome P450 71B5 (498 aa).

The helical transmembrane segment at 3 to 23 (IFLCFLLLLPLSLIFLKKLLP) threads the bilayer. Heme is bound at residue Cys-439.

Belongs to the cytochrome P450 family. Heme is required as a cofactor.

The protein resides in the membrane. The sequence is that of Cytochrome P450 71B5 (CYP71B5) from Arabidopsis thaliana (Mouse-ear cress).